Consider the following 337-residue polypeptide: Acetyl-coenzyme A synthetase (337 aa).

CoA is bound by residues 131–134, threonine 249, and asparagine 273; that span reads RGGR. 325–327 contacts ATP; sequence GEP.

Belongs to the ATP-dependent AMP-binding enzyme family. The cofactor is Mg(2+). Post-translationally, acetylated. Deacetylation by the SIR2-homolog deacetylase activates the enzyme.

The enzyme catalyses acetate + ATP + CoA = acetyl-CoA + AMP + diphosphate. Functionally, catalyzes the conversion of acetate into acetyl-CoA (AcCoA), an essential intermediate at the junction of anabolic and catabolic pathways. AcsA undergoes a two-step reaction. In the first half reaction, AcsA combines acetate with ATP to form acetyl-adenylate (AcAMP) intermediate. In the second half reaction, it can then transfer the acetyl group from AcAMP to the sulfhydryl group of CoA, forming the product AcCoA. The polypeptide is Acetyl-coenzyme A synthetase (acsA) (Nostoc linckia).